The sequence spans 197 residues: Stanniocalcin-2 (197 aa).

Positions 1-20 (TDAXNPPEGPQDRGSQQKGR) are disordered.

This sequence belongs to the stanniocalcin family. As to quaternary structure, homodimer; disulfide-linked.

It localises to the secreted. In terms of biological role, has an anti-hypocalcemic action on calcium and phosphate homeostasis. This is Stanniocalcin-2 (STC2) from Cavia porcellus (Guinea pig).